We begin with the raw amino-acid sequence, 147 residues long: Prefoldin subunit alpha (147 aa).

It belongs to the prefoldin alpha subunit family. In terms of assembly, heterohexamer of two alpha and four beta subunits.

The protein resides in the cytoplasm. Its function is as follows. Molecular chaperone capable of stabilizing a range of proteins. Seems to fulfill an ATP-independent, HSP70-like function in archaeal de novo protein folding. The chain is Prefoldin subunit alpha from Saccharolobus islandicus (strain L.S.2.15 / Lassen #1) (Sulfolobus islandicus).